A 464-amino-acid polypeptide reads, in one-letter code: uncharacterized protein (464 aa).

The signal sequence occupies residues 1–24 (MSRFVPRIIPFYLLLLVAGGTANA).

Belongs to the intimin/invasin family.

The protein localises to the periplasm. This is an uncharacterized protein from Escherichia coli (strain K12).